A 457-amino-acid chain; its full sequence is Subtilisin-like serine protease Pen c 2 (457 aa).

The signal sequence occupies residues 1 to 16 (MKGFLGLALLPLLTAA). The propeptide at 17 to 136 (SPVSVESIHN…IEKDSEVHHF (120 aa)) is removed in mature form. Residues 43–134 (SYIVVFKKHV…DYIEKDSEVH (92 aa)) form the Inhibitor I9 domain. The Peptidase S8 domain occupies 146–457 (PWGLARISHR…YTDIVAQGGY (312 aa)). Catalysis depends on charge relay system residues D182 and H214. N-linked (GlcNAc...) asparagine glycans are attached at residues N244 and N284. S380 acts as the Charge relay system in catalysis. Residue N447 is glycosylated (N-linked (GlcNAc...) asparagine).

Belongs to the peptidase S8 family.

Serine protease. This is Subtilisin-like serine protease Pen c 2 from Penicillium citrinum.